A 300-amino-acid polypeptide reads, in one-letter code: Arrestin domain-containing protein 4 (300 aa).

2 short sequence motifs (PPxY motif) span residues 231–234 and 276–279; these read PPNY and PPLY.

Belongs to the arrestin family. Interacts with ADRB2. Interacts (via PPxY motifs) with ITCH, NEDD4L and WWP2. Interacts with AVPR2. Identified in a complex containing at least ARRDC4, AVPR2 and HGS. Interacts with SLC11A2; controls the incorporation of SLC11A2 into extracellular vesicles through an ubiquitination-dependent mechanism. Interacts with TRIM65.

The protein resides in the early endosome. It is found in the cell membrane. Its subcellular location is the cytoplasmic vesicle. In terms of biological role, functions as an adapter recruiting ubiquitin-protein ligases to their specific substrates. Plays a role in endocytosis of activated G protein-coupled receptors (GPCRs) Through an ubiquitination-dependent mechanism also plays a role in the incorporation of SLC11A2 into extracellular vesicles. May play a role in glucose uptake. Participates in innate immune response by promoting IFIH1/MDA5 activation through interaction with TRIM65. In Rattus norvegicus (Rat), this protein is Arrestin domain-containing protein 4 (Arrdc4).